The chain runs to 320 residues: Ferrochelatase (320 aa).

2 residues coordinate Fe cation: His194 and Glu275.

It belongs to the ferrochelatase family.

It localises to the cytoplasm. It carries out the reaction heme b + 2 H(+) = protoporphyrin IX + Fe(2+). Its pathway is porphyrin-containing compound metabolism; protoheme biosynthesis; protoheme from protoporphyrin-IX: step 1/1. Functionally, catalyzes the ferrous insertion into protoporphyrin IX. The sequence is that of Ferrochelatase from Vibrio atlanticus (strain LGP32) (Vibrio splendidus (strain Mel32)).